The sequence spans 378 residues: CST complex subunit STN1 (378 aa).

The interaction with CTC1 stretch occupies residues 8–195 (MECESSPREE…KVYDQPFRNP (188 aa)). A DNA-binding region (OB) is located at residues 64-165 (VDIMGAVISV…EICANIYYKV (102 aa)). 2 winged helix-turn-helix (wHTH) regions span residues 201–305 (EALN…YVTT) and 306–378 (KDKD…YAAF).

This sequence belongs to the STN1 family. As to quaternary structure, component of the CST complex, composed of TEN1/C17orf106, CTC1/C17orf68 and STN1; in the complex interacts directly with TEN1 and CTC1. Interacts with ACD/TPP1. Interacts with POT1 and POLA1.

It is found in the nucleus. Its subcellular location is the chromosome. The protein localises to the telomere. Component of the CST complex proposed to act as a specialized replication factor promoting DNA replication under conditions of replication stress or natural replication barriers such as the telomere duplex. The CST complex binds single-stranded DNA with high affinity in a sequence-independent manner, while isolated subunits bind DNA with low affinity by themselves. Initially the CST complex has been proposed to protect telomeres from DNA degradation. However, the CST complex has been shown to be involved in several aspects of telomere replication. The CST complex inhibits telomerase and is involved in telomere length homeostasis; it is proposed to bind to newly telomerase-synthesized 3' overhangs and to terminate telomerase action implicating the association with the ACD:POT1 complex thus interfering with its telomerase stimulation activity. The CST complex is also proposed to be involved in fill-in synthesis of the telomeric C-strand probably implicating recruitment and activation of DNA polymerase alpha. The CST complex facilitates recovery from many forms of exogenous DNA damage; seems to be involved in the re-initiation of DNA replication at repaired forks and/or dormant origins. Required for efficicient replication of the duplex region of the telomere. Promotes efficient replication of lagging-strand telomeres. Promotes general replication start following replication-fork stalling implicating new origin firing. May be in involved in C-strand fill-in during late S/G2 phase independent of its role in telomere duplex replication. The chain is CST complex subunit STN1 from Mus musculus (Mouse).